A 313-amino-acid polypeptide reads, in one-letter code: Potassium channel subfamily K member 6 (313 aa).

The Cytoplasmic portion of the chain corresponds to 1–4; that stretch reads MRRG. A helical membrane pass occupies residues 5–25; that stretch reads ALLAGALAAYAAYLVLGALLV. Asn-79 and Asn-85 each carry an N-linked (GlcNAc...) asparagine glycan. The pore-forming intramembrane region spans 90–115; that stretch reads AWDFASALFFASTLITTVGYGYTTPL. 4 residues coordinate K(+): Thr-106, Val-107, Gly-108, and Tyr-109. The segment at 106-111 is selectivity filter 1; the sequence is TVGYGY. The helical transmembrane segment at 121 to 141 threads the bilayer; sequence AFSIAFALLGVPTTMLLLTAS. Residues 142–172 lie on the Cytoplasmic side of the membrane; that stretch reads AQRLSLLLTHVPLSWLSMRWGWDPRRAACWH. A helical membrane pass occupies residues 173 to 193; sequence LVALLGVVVTVCFLVPAVIFA. An intramembrane region (pore-forming) is located at residues 199–223; that stretch reads WSFLDAFYFCFISLSTIGLGDYVPG. K(+) contacts are provided by Thr-214, Ile-215, and Gly-216. Positions 214–219 are selectivity filter 2; the sequence is TIGLGD. A helical membrane pass occupies residues 236-256; that stretch reads VLVTVYLFLGLVAMVLVLQTF. Residues 257-313 are Cytoplasmic-facing; it reads RHVSDLHGLTELILLPPPCPASFNADEDDRVDILGPQPESHQQLSASSHTDYASIPR. The Lysosomal targeting signal motif lies at 282-290; that stretch reads DEDDRVDIL. Positions 288–313 are disordered; it reads DILGPQPESHQQLSASSHTDYASIPR. The segment covering 295–307 has biased composition (polar residues); sequence ESHQQLSASSHTD. Positions 308–312 match the Lysosomal targeting signal motif; the sequence is YASIP.

Belongs to the two pore domain potassium channel (TC 1.A.1.8) family. As to quaternary structure, homodimer; disulfide-linked. Post-translationally, N-glycosylation is necessary for targeting to lysosomes. As to expression, widespread expression, detected in all tissues tested except for skeletal muscle. Strongest expression in placenta, pancreas, heart, colon and spleen, lower levels detected in peripheral blood leukocytes, lung, liver, kidney and thymus. Lowest expression detected in brain.

The protein localises to the late endosome membrane. It localises to the lysosome membrane. It catalyses the reaction K(+)(in) = K(+)(out). In terms of biological role, k(+) channel that conducts outward rectifying currents at the membranes of the endolysosomal system. Active in lysosomes where it regulates lysosome numbers and size. In macrophages, enables K(+) efflux coupled to ATP-induced NLRP3 inflammasome activation upon bacterial infection. Cooperates with ATP-gated P2RX7 channels to activate NLRP3 inflammasome, with P2RX7 conducting Ca(2+) and Na(+) influx that sets the membrane potential for K(+) efflux. Does not display channel activity. The sequence is that of Potassium channel subfamily K member 6 from Homo sapiens (Human).